We begin with the raw amino-acid sequence, 544 residues long: O-phosphoserine--tRNA(Cys) ligase (544 aa).

Substrate-binding positions include 194-196 (HMT), 239-241 (SAS), 281-282 (YY), and asparagine 335.

It belongs to the class-II aminoacyl-tRNA synthetase family. O-phosphoseryl-tRNA(Cys) synthetase subfamily. Homotetramer. Interacts with SepCysS.

The catalysed reaction is tRNA(Cys) + O-phospho-L-serine + ATP = O-phospho-L-seryl-tRNA(Cys) + AMP + diphosphate. Its function is as follows. Catalyzes the attachment of O-phosphoserine (Sep) to tRNA(Cys). In Methanopyrus kandleri (strain AV19 / DSM 6324 / JCM 9639 / NBRC 100938), this protein is O-phosphoserine--tRNA(Cys) ligase.